The sequence spans 272 residues: 2-succinyl-6-hydroxy-2,4-cyclohexadiene-1-carboxylate synthase (272 aa).

It belongs to the AB hydrolase superfamily. MenH family. As to quaternary structure, monomer.

The enzyme catalyses 5-enolpyruvoyl-6-hydroxy-2-succinyl-cyclohex-3-ene-1-carboxylate = (1R,6R)-6-hydroxy-2-succinyl-cyclohexa-2,4-diene-1-carboxylate + pyruvate. The protein operates within quinol/quinone metabolism; 1,4-dihydroxy-2-naphthoate biosynthesis; 1,4-dihydroxy-2-naphthoate from chorismate: step 3/7. It functions in the pathway quinol/quinone metabolism; menaquinone biosynthesis. Functionally, catalyzes a proton abstraction reaction that results in 2,5-elimination of pyruvate from 2-succinyl-5-enolpyruvyl-6-hydroxy-3-cyclohexene-1-carboxylate (SEPHCHC) and the formation of 2-succinyl-6-hydroxy-2,4-cyclohexadiene-1-carboxylate (SHCHC). This Yersinia pestis bv. Antiqua (strain Nepal516) protein is 2-succinyl-6-hydroxy-2,4-cyclohexadiene-1-carboxylate synthase.